The sequence spans 371 residues: Histidinol-phosphate aminotransferase (371 aa).

K227 is modified (N6-(pyridoxal phosphate)lysine).

It belongs to the class-II pyridoxal-phosphate-dependent aminotransferase family. Histidinol-phosphate aminotransferase subfamily. As to quaternary structure, homodimer. It depends on pyridoxal 5'-phosphate as a cofactor.

The catalysed reaction is L-histidinol phosphate + 2-oxoglutarate = 3-(imidazol-4-yl)-2-oxopropyl phosphate + L-glutamate. It participates in amino-acid biosynthesis; L-histidine biosynthesis; L-histidine from 5-phospho-alpha-D-ribose 1-diphosphate: step 7/9. The chain is Histidinol-phosphate aminotransferase from Sphingopyxis alaskensis (strain DSM 13593 / LMG 18877 / RB2256) (Sphingomonas alaskensis).